The chain runs to 535 residues: T-complex protein 1 subunit beta (535 aa).

A2 is subject to N-acetylalanine. S3 carries the post-translational modification Phosphoserine. N6-acetyllysine is present on K13. Residue G44 coordinates ADP. G44 contributes to the ATP binding site. S60 is modified (phosphoserine). D97 provides a ligand contact to Mg(2+). ADP-binding residues include G98, T99, T100, and S101. 3 residues coordinate ATP: G98, T99, and T100. K154 is modified (N6-acetyllysine). Residues S168 and S169 each contribute to the ADP site. N6-acetyllysine is present on K181. A Glycyl lysine isopeptide (Lys-Gly) (interchain with G-Cter in SUMO2) cross-link involves residue K248. Residue S260 is modified to Phosphoserine. T261 is subject to Phosphothreonine. The ADP site is built by G410, E495, and K500. Residues E495 and K500 each contribute to the ATP site.

This sequence belongs to the TCP-1 chaperonin family. Component of the chaperonin-containing T-complex (TRiC), a hexadecamer composed of two identical back-to-back stacked rings enclosing a protein folding chamber. Each ring is made up of eight different subunits: TCP1/CCT1, CCT2, CCT3, CCT4, CCT5, CCT6A/CCT6, CCT7, CCT8. Interacts with PACRG. Interacts with FLCN. Interacts with DLEC1. Interacts with SVEP1.

It is found in the cytoplasm. The catalysed reaction is ATP + H2O = ADP + phosphate + H(+). Its function is as follows. Component of the chaperonin-containing T-complex (TRiC), a molecular chaperone complex that assists the folding of actin, tubulin and other proteins upon ATP hydrolysis. The TRiC complex mediates the folding of WRAP53/TCAB1, thereby regulating telomere maintenance. As part of the TRiC complex may play a role in the assembly of BBSome, a complex involved in ciliogenesis regulating transports vesicles to the cilia. In Rattus norvegicus (Rat), this protein is T-complex protein 1 subunit beta (Cct2).